Consider the following 420-residue polypeptide: UDP-N-acetylglucosamine 1-carboxyvinyltransferase (420 aa).

Phosphoenolpyruvate is bound at residue 22 to 23 (KN). Residue R92 participates in UDP-N-acetyl-alpha-D-glucosamine binding. The active-site Proton donor is C116. Residue C116 is modified to 2-(S-cysteinyl)pyruvic acid O-phosphothioketal. D306 and I328 together coordinate UDP-N-acetyl-alpha-D-glucosamine.

It belongs to the EPSP synthase family. MurA subfamily.

The protein resides in the cytoplasm. The enzyme catalyses phosphoenolpyruvate + UDP-N-acetyl-alpha-D-glucosamine = UDP-N-acetyl-3-O-(1-carboxyvinyl)-alpha-D-glucosamine + phosphate. The protein operates within cell wall biogenesis; peptidoglycan biosynthesis. Its function is as follows. Cell wall formation. Adds enolpyruvyl to UDP-N-acetylglucosamine. The protein is UDP-N-acetylglucosamine 1-carboxyvinyltransferase of Blochmanniella floridana.